A 293-amino-acid chain; its full sequence is Pantothenate synthetase (293 aa).

30-37 (MGYLHKGH) serves as a coordination point for ATP. Residue His-37 is the Proton donor of the active site. A (R)-pantoate-binding site is contributed by Gln-61. Gln-61 lines the beta-alanine pocket. 147–150 (GEKD) is a binding site for ATP. (R)-pantoate is bound at residue Gln-153. ATP-binding positions include Val-176 and 184–187 (CSSR).

This sequence belongs to the pantothenate synthetase family. In terms of assembly, homodimer.

Its subcellular location is the cytoplasm. It carries out the reaction (R)-pantoate + beta-alanine + ATP = (R)-pantothenate + AMP + diphosphate + H(+). Its pathway is cofactor biosynthesis; (R)-pantothenate biosynthesis; (R)-pantothenate from (R)-pantoate and beta-alanine: step 1/1. Functionally, catalyzes the condensation of pantoate with beta-alanine in an ATP-dependent reaction via a pantoyl-adenylate intermediate. The sequence is that of Pantothenate synthetase from Brucella melitensis biotype 2 (strain ATCC 23457).